Consider the following 241-residue polypeptide: Sec-independent protein translocase protein TatC (241 aa).

Helical transmembrane passes span 27-47 (LIIV…FSAG), 76-96 (LTMC…YEAF), 122-142 (FVAG…SIVI), 161-181 (IVTN…IIVL), 193-213 (LVKG…FFSP), and 217-237 (LFSQ…SMVL).

Belongs to the TatC family. As to quaternary structure, forms a complex with TatA.

The protein localises to the cell membrane. Its function is as follows. Part of the twin-arginine translocation (Tat) system that transports large folded proteins containing a characteristic twin-arginine motif in their signal peptide across membranes. The polypeptide is Sec-independent protein translocase protein TatC (Methanocella arvoryzae (strain DSM 22066 / NBRC 105507 / MRE50)).